Here is a 332-residue protein sequence, read N- to C-terminus: Spherulin-4 (332 aa).

Residues Met-1 to His-22 form the signal peptide. Residues His-26–Thr-60 form a disordered region.

The sequence is that of Spherulin-4 from Physarum polycephalum (Slime mold).